The following is an 87-amino-acid chain: MAHHKSALKRIKQNKKKYLRNKHIRSTLRTFIKRVREAVEAKNADQARQALLAAIPVIDKAASKGVIHASNASRNVSRLTKLVNTLG.

It belongs to the bacterial ribosomal protein bS20 family.

Binds directly to 16S ribosomal RNA. The protein is Small ribosomal subunit protein bS20 of Geobacter sulfurreducens (strain ATCC 51573 / DSM 12127 / PCA).